Reading from the N-terminus, the 338-residue chain is RAB6-interacting golgin (338 aa).

Basic and acidic residues-rich tracts occupy residues Met1–Leu14 and Arg46–Arg59. Disordered stretches follow at residues Met1–Asp109 and Ala127–Lys188. Composition is skewed to low complexity over residues Lys60–Pro73 and Ser153–Ser167. Residues Leu192 to Asp244 are a coiled coil. The tract at residues Asp244–Cys260 is essential for Sas-6 binding. The necessary for localization to the centrosome stretch occupies residues Ala246–Asn286. Residues Ala246 to Ser323 are necessary for localization to the Golgi. The segment at Cys260 to Asn286 is necessary for interaction with Sas-6 and essential for homodimerization.

The protein belongs to the GORAB family. In terms of assembly, homodimer (via C-terminus); dimerization appears to be required for its trans-Golgi localization but not for its function and centriolar localization. Interacts (via C-terminus) with Rab6; binds Rab6 as a homodimer, this interaction seems to be required for trans-Golgi localization. Interacts (via C-terminus) with Sas-6; binds as a monomer to a Sas-6 homodimer.

It is found in the cytoplasm. It localises to the cytoskeleton. The protein resides in the microtubule organizing center. The protein localises to the centrosome. Its subcellular location is the centriole. It is found in the golgi apparatus. It localises to the trans-Golgi network. Functionally, required for centriole duplication likely through its interaction with Sas-6. During embryogenesis, maternally provided protein is required for centrosome duplication and nuclear division cycles of the syncytial embryos. In femoral chordotonal organs, required for sensory cilia structural integrity and functionality necessary for motor coordination. In male germline, has a role in cytokinesis which seems dependent on its localization to the Golgi. The protein is RAB6-interacting golgin of Drosophila melanogaster (Fruit fly).